The sequence spans 261 residues: tRNA 5-carboxymethoxyuridine methyltransferase (261 aa).

Residues Arg-26, 52–53 (GG), Asp-73, 102–103 (AQ), and His-119 each bind S-adenosyl-L-methionine.

The protein belongs to the class I-like SAM-binding methyltransferase superfamily. CmoM family. Homodimer.

It carries out the reaction 5-carboxymethoxyuridine(34) in tRNA + S-adenosyl-L-methionine = 5-methoxycarbonylmethoxyuridine(34) in tRNA + S-adenosyl-L-homocysteine. Catalyzes the methylation of 5-carboxymethoxyuridine (cmo5U) to form 5-methoxycarbonylmethoxyuridine (mcmo5U) at position 34 in tRNAs. The sequence is that of tRNA 5-carboxymethoxyuridine methyltransferase from Escherichia coli O157:H7.